Reading from the N-terminus, the 220-residue chain is Charged multivesicular body protein 3 (220 aa).

Gly-2 carries the N-myristoyl glycine lipid modification. Residues 22 to 54 (KIRKEMRVIDRQIRDIQREQEKVKRSIKESAKK) adopt a coiled-coil conformation. An important for autoinhibitory function region spans residues 168–169 (IL). Residues 181–220 (PSKVTDALPEPEITGAMAASDEEEEEDLEAMHSRLAALRS) are disordered. An MIT-interacting motif motif is present at residues 201–209 (DEEEEEDLE). 2 interaction with STAMBP regions span residues 203–207 (EEEED) and 219–220 (RS).

The protein belongs to the SNF7 family. In terms of assembly, probable core component of the endosomal sorting required for transport complex III (ESCRT-III). ESCRT-III components are thought to multimerize to form a flat lattice on the perimeter membrane of the endosome. Several assembly forms of ESCRT-III may exist that interact and act sequentially.

The protein resides in the cytoplasm. It localises to the cytosol. It is found in the membrane. The protein localises to the endosome. Its subcellular location is the late endosome membrane. Its function is as follows. Probable core component of the endosomal sorting required for transport complex III (ESCRT-III) which is involved in multivesicular bodies (MVBs) formation and sorting of endosomal cargo proteins into MVBs. MVBs contain intraluminal vesicles (ILVs) that are generated by invagination and scission from the limiting membrane of the endosome and mostly are delivered to lysosomes enabling degradation of membrane proteins, such as stimulated growth factor receptors, lysosomal enzymes and lipids. Involved in late stages of cytokinesis. Plays a role in endosomal sorting/trafficking of EGF receptor. This chain is Charged multivesicular body protein 3 (chmp3), found in Xenopus laevis (African clawed frog).